The primary structure comprises 486 residues: ATP synthase subunit beta (486 aa).

ATP is bound at residue 164 to 171 (GGAGVGKT).

Belongs to the ATPase alpha/beta chains family. In terms of assembly, F-type ATPases have 2 components, CF(1) - the catalytic core - and CF(0) - the membrane proton channel. CF(1) has five subunits: alpha(3), beta(3), gamma(1), delta(1), epsilon(1). CF(0) has four main subunits: a(1), b(1), b'(1) and c(9-12).

It localises to the cellular thylakoid membrane. It catalyses the reaction ATP + H2O + 4 H(+)(in) = ADP + phosphate + 5 H(+)(out). In terms of biological role, produces ATP from ADP in the presence of a proton gradient across the membrane. The catalytic sites are hosted primarily by the beta subunits. This chain is ATP synthase subunit beta, found in Prochlorococcus marinus subsp. pastoris (strain CCMP1986 / NIES-2087 / MED4).